The sequence spans 141 residues: Large-conductance mechanosensitive channel (141 aa).

3 helical membrane passes run Val14–Leu34, Ile38–Gly58, and Gly81–Val101.

The protein belongs to the MscL family. Homopentamer.

It localises to the cell inner membrane. In terms of biological role, channel that opens in response to stretch forces in the membrane lipid bilayer. May participate in the regulation of osmotic pressure changes within the cell. In Rhizobium rhizogenes (strain K84 / ATCC BAA-868) (Agrobacterium radiobacter), this protein is Large-conductance mechanosensitive channel.